Reading from the N-terminus, the 278-residue chain is ATP-dependent dethiobiotin synthetase BioD 1 (278 aa).

Position 51–56 (51–56 (NVGKTI)) interacts with ATP. Thr-55 contacts Mg(2+). Residue Lys-76 is part of the active site. Position 102 (Asp-102) interacts with ATP. Asp-102 and Glu-163 together coordinate Mg(2+). ATP contacts are provided by residues 223-224 (NR) and 252-254 (PYI).

The protein belongs to the dethiobiotin synthetase family. In terms of assembly, homodimer. The cofactor is Mg(2+).

It localises to the cytoplasm. The enzyme catalyses (7R,8S)-7,8-diammoniononanoate + CO2 + ATP = (4R,5S)-dethiobiotin + ADP + phosphate + 3 H(+). It participates in cofactor biosynthesis; biotin biosynthesis; biotin from 7,8-diaminononanoate: step 1/2. Catalyzes a mechanistically unusual reaction, the ATP-dependent insertion of CO2 between the N7 and N8 nitrogen atoms of 7,8-diaminopelargonic acid (DAPA, also called 7,8-diammoniononanoate) to form a ureido ring. The protein is ATP-dependent dethiobiotin synthetase BioD 1 of Haemophilus ducreyi (strain 35000HP / ATCC 700724).